A 177-amino-acid polypeptide reads, in one-letter code: Large ribosomal subunit protein uL6 (177 aa).

Belongs to the universal ribosomal protein uL6 family. Part of the 50S ribosomal subunit.

In terms of biological role, this protein binds to the 23S rRNA, and is important in its secondary structure. It is located near the subunit interface in the base of the L7/L12 stalk, and near the tRNA binding site of the peptidyltransferase center. In Rhizorhabdus wittichii (strain DSM 6014 / CCUG 31198 / JCM 15750 / NBRC 105917 / EY 4224 / RW1) (Sphingomonas wittichii), this protein is Large ribosomal subunit protein uL6.